Consider the following 173-residue polypeptide: MSIILGIDPGSRITGYGVIRQQGRHLQYLGSGCIRTSEKELPGRLKQIYAGVTEIITQFQPDVFAIEQVFMAKNADSALKLGQARGSAIVAAVNADLPVYEYAARLIKQAVVGTGGADKVQVQHMVQHMLKLPAKPQADAADALGVAICHANTNKTLVALAGKASSARKGRYR.

Active-site residues include Asp-8, Glu-67, and Asp-139. Residues Asp-8, Glu-67, and Asp-139 each contribute to the Mg(2+) site.

The protein belongs to the RuvC family. In terms of assembly, homodimer which binds Holliday junction (HJ) DNA. The HJ becomes 2-fold symmetrical on binding to RuvC with unstacked arms; it has a different conformation from HJ DNA in complex with RuvA. In the full resolvosome a probable DNA-RuvA(4)-RuvB(12)-RuvC(2) complex forms which resolves the HJ. Mg(2+) serves as cofactor.

Its subcellular location is the cytoplasm. It carries out the reaction Endonucleolytic cleavage at a junction such as a reciprocal single-stranded crossover between two homologous DNA duplexes (Holliday junction).. Functionally, the RuvA-RuvB-RuvC complex processes Holliday junction (HJ) DNA during genetic recombination and DNA repair. Endonuclease that resolves HJ intermediates. Cleaves cruciform DNA by making single-stranded nicks across the HJ at symmetrical positions within the homologous arms, yielding a 5'-phosphate and a 3'-hydroxyl group; requires a central core of homology in the junction. The consensus cleavage sequence is 5'-(A/T)TT(C/G)-3'. Cleavage occurs on the 3'-side of the TT dinucleotide at the point of strand exchange. HJ branch migration catalyzed by RuvA-RuvB allows RuvC to scan DNA until it finds its consensus sequence, where it cleaves and resolves the cruciform DNA. The polypeptide is Crossover junction endodeoxyribonuclease RuvC (Vibrio parahaemolyticus serotype O3:K6 (strain RIMD 2210633)).